We begin with the raw amino-acid sequence, 118 residues long: Small ribosomal subunit protein uS13 (118 aa).

The tract at residues 94 to 118 is disordered; the sequence is SLPLRGQRTKTNARTRKGPRKPIRK.

It belongs to the universal ribosomal protein uS13 family. As to quaternary structure, part of the 30S ribosomal subunit. Forms a loose heterodimer with protein S19. Forms two bridges to the 50S subunit in the 70S ribosome.

Its function is as follows. Located at the top of the head of the 30S subunit, it contacts several helices of the 16S rRNA. In the 70S ribosome it contacts the 23S rRNA (bridge B1a) and protein L5 of the 50S subunit (bridge B1b), connecting the 2 subunits; these bridges are implicated in subunit movement. Contacts the tRNAs in the A and P-sites. This Shewanella woodyi (strain ATCC 51908 / MS32) protein is Small ribosomal subunit protein uS13.